Here is a 259-residue protein sequence, read N- to C-terminus: UPF0246 protein MADE_1015435 (259 aa).

This sequence belongs to the UPF0246 family.

The protein is UPF0246 protein MADE_1015435 of Alteromonas mediterranea (strain DSM 17117 / CIP 110805 / LMG 28347 / Deep ecotype).